Consider the following 175-residue polypeptide: ATP synthase subunit delta (175 aa).

The protein belongs to the ATPase delta chain family. In terms of assembly, F-type ATPases have 2 components, F(1) - the catalytic core - and F(0) - the membrane proton channel. F(1) has five subunits: alpha(3), beta(3), gamma(1), delta(1), epsilon(1). F(0) has three main subunits: a(1), b(2) and c(10-14). The alpha and beta chains form an alternating ring which encloses part of the gamma chain. F(1) is attached to F(0) by a central stalk formed by the gamma and epsilon chains, while a peripheral stalk is formed by the delta and b chains.

Its subcellular location is the cell inner membrane. F(1)F(0) ATP synthase produces ATP from ADP in the presence of a proton or sodium gradient. F-type ATPases consist of two structural domains, F(1) containing the extramembraneous catalytic core and F(0) containing the membrane proton channel, linked together by a central stalk and a peripheral stalk. During catalysis, ATP synthesis in the catalytic domain of F(1) is coupled via a rotary mechanism of the central stalk subunits to proton translocation. Its function is as follows. This protein is part of the stalk that links CF(0) to CF(1). It either transmits conformational changes from CF(0) to CF(1) or is implicated in proton conduction. In Xanthomonas euvesicatoria pv. vesicatoria (strain 85-10) (Xanthomonas campestris pv. vesicatoria), this protein is ATP synthase subunit delta.